Here is a 437-residue protein sequence, read N- to C-terminus: Adenylosuccinate synthetase, organellar chromatophore (437 aa).

Residues 12–18 (GDEGKGK) and 40–42 (GHT) contribute to the GTP site. Aspartate 13 functions as the Proton acceptor in the catalytic mechanism. Residues aspartate 13 and glycine 40 each coordinate Mg(2+). IMP-binding positions include 13–16 (DEGK), 38–41 (NAGH), threonine 128, arginine 142, glutamine 223, threonine 238, and arginine 302. Histidine 41 functions as the Proton donor in the catalytic mechanism. Substrate is bound at residue 298–304 (TTTGRRR). Residues arginine 304 and 330 to 332 (KLD) contribute to the GTP site.

The protein belongs to the adenylosuccinate synthetase family. In terms of assembly, homodimer. The cofactor is Mg(2+).

It localises to the plastid. It is found in the organellar chromatophore. The enzyme catalyses IMP + L-aspartate + GTP = N(6)-(1,2-dicarboxyethyl)-AMP + GDP + phosphate + 2 H(+). The protein operates within purine metabolism; AMP biosynthesis via de novo pathway; AMP from IMP: step 1/2. In terms of biological role, plays an important role in the de novo pathway and in the salvage pathway of purine nucleotide biosynthesis. Catalyzes the first committed step in the biosynthesis of AMP from IMP. This is Adenylosuccinate synthetase, organellar chromatophore from Paulinella chromatophora.